We begin with the raw amino-acid sequence, 602 residues long: Elongation factor 4 (602 aa).

The tr-type G domain occupies 6–188 (DRIRNFCIIA…RIVTRIPPPG (183 aa)). Residues 18–23 (DHGKST) and 135–138 (NKID) each bind GTP.

Belongs to the TRAFAC class translation factor GTPase superfamily. Classic translation factor GTPase family. LepA subfamily.

It localises to the cell membrane. The enzyme catalyses GTP + H2O = GDP + phosphate + H(+). Required for accurate and efficient protein synthesis under certain stress conditions. May act as a fidelity factor of the translation reaction, by catalyzing a one-codon backward translocation of tRNAs on improperly translocated ribosomes. Back-translocation proceeds from a post-translocation (POST) complex to a pre-translocation (PRE) complex, thus giving elongation factor G a second chance to translocate the tRNAs correctly. Binds to ribosomes in a GTP-dependent manner. This Pelotomaculum thermopropionicum (strain DSM 13744 / JCM 10971 / SI) protein is Elongation factor 4.